The sequence spans 131 residues: Conotoxin Cal8.1 (131 aa).

A signal peptide spans 1 to 19; that stretch reads MKLLLTLLLGSALMCITLA. A propeptide spanning residues 20–38 is cleaved from the precursor; sequence DECGLGTHRPVKEVIDNVR.

Contains 4 disulfide bonds. Expressed by the venom duct.

Its subcellular location is the secreted. Probable neurotoxin with unknown target. Possibly targets ion channels. The sequence is that of Conotoxin Cal8.1 from Californiconus californicus (California cone).